Here is a 295-residue protein sequence, read N- to C-terminus: GTPase Era (295 aa).

The Era-type G domain maps to 5–172 (YCGYAAIIGR…EQAVHQLMPE (168 aa)). The tract at residues 13 to 20 (GRPNVGKS) is G1. Residue 13 to 20 (GRPNVGKS) participates in GTP binding. Residues 39–43 (QTTRY) are G2. The G3 stretch occupies residues 60–63 (DTPG). Residues 60–64 (DTPGL) and 121–124 (NKVD) contribute to the GTP site. Positions 121-124 (NKVD) are G4. The interval 151-153 (LSA) is G5. Residues 203–279 (LGQEIPYSLA…FLQLWVKVKS (77 aa)) enclose the KH type-2 domain.

This sequence belongs to the TRAFAC class TrmE-Era-EngA-EngB-Septin-like GTPase superfamily. Era GTPase family. As to quaternary structure, monomer.

The protein resides in the cytoplasm. It localises to the cell inner membrane. An essential GTPase that binds both GDP and GTP, with rapid nucleotide exchange. Plays a role in 16S rRNA processing and 30S ribosomal subunit biogenesis and possibly also in cell cycle regulation and energy metabolism. In Coxiella burnetii (strain CbuK_Q154) (Coxiella burnetii (strain Q154)), this protein is GTPase Era.